Consider the following 488-residue polypeptide: Glutamyl-tRNA(Gln) amidotransferase subunit A (488 aa).

Catalysis depends on charge relay system residues lysine 77 and serine 152. Catalysis depends on serine 176, which acts as the Acyl-ester intermediate.

Belongs to the amidase family. GatA subfamily. As to quaternary structure, heterotrimer of A, B and C subunits.

It catalyses the reaction L-glutamyl-tRNA(Gln) + L-glutamine + ATP + H2O = L-glutaminyl-tRNA(Gln) + L-glutamate + ADP + phosphate + H(+). Its function is as follows. Allows the formation of correctly charged Gln-tRNA(Gln) through the transamidation of misacylated Glu-tRNA(Gln) in organisms which lack glutaminyl-tRNA synthetase. The reaction takes place in the presence of glutamine and ATP through an activated gamma-phospho-Glu-tRNA(Gln). The polypeptide is Glutamyl-tRNA(Gln) amidotransferase subunit A (Streptococcus pyogenes serotype M18 (strain MGAS8232)).